Here is a 307-residue protein sequence, read N- to C-terminus: UDP-3-O-acyl-N-acetylglucosamine deacetylase (307 aa).

Zn(2+) contacts are provided by histidine 78, histidine 235, and aspartate 239. The Proton donor role is filled by histidine 262.

Belongs to the LpxC family. It depends on Zn(2+) as a cofactor.

The enzyme catalyses a UDP-3-O-[(3R)-3-hydroxyacyl]-N-acetyl-alpha-D-glucosamine + H2O = a UDP-3-O-[(3R)-3-hydroxyacyl]-alpha-D-glucosamine + acetate. The protein operates within glycolipid biosynthesis; lipid IV(A) biosynthesis; lipid IV(A) from (3R)-3-hydroxytetradecanoyl-[acyl-carrier-protein] and UDP-N-acetyl-alpha-D-glucosamine: step 2/6. In terms of biological role, catalyzes the hydrolysis of UDP-3-O-myristoyl-N-acetylglucosamine to form UDP-3-O-myristoylglucosamine and acetate, the committed step in lipid A biosynthesis. The sequence is that of UDP-3-O-acyl-N-acetylglucosamine deacetylase from Geotalea uraniireducens (strain Rf4) (Geobacter uraniireducens).